The primary structure comprises 45 residues: Pseudo-hevein (45 aa).

The 43-residue stretch at 1–43 (EQCGRQAGGKLCPNNLCCSQYGWCGSSDDYCSPSKNCQSNCKG) folds into the Chitin-binding type-1 domain. 4 cysteine pairs are disulfide-bonded: Cys3–Cys18, Cys12–Cys24, Cys17–Cys31, and Cys37–Cys41.

Its function is as follows. N-acetyl-D-glucosamine / N-acetyl-D-neuraminic acid binding lectin. Can inhibit fungal growth. This is Pseudo-hevein from Hevea brasiliensis (Para rubber tree).